The following is a 129-amino-acid chain: MSMFKTIQFQPRVVTLFTHKLESSHAQNLLTALKSNHKNKINIEICQKFPTRDQLEYLAKIDKPDLMEQIPKTESLLKKAAEDPLFGSPLQKCVENGSWNKQTSLWVDWEKAVLGTTVQSLKEKWLPKN.

A mitochondrion-targeting transit peptide spans 1-21; it reads MSMFKTIQFQPRVVTLFTHKL. Cys-93 is a catalytic residue.

It belongs to the FMP46 family.

It localises to the mitochondrion. Its function is as follows. Putative mitochondrial redox protein which could be involved in the reduction of small toxic molecules. The chain is Putative redox protein FMP46, mitochondrial (FMP46) from Kluyveromyces lactis (strain ATCC 8585 / CBS 2359 / DSM 70799 / NBRC 1267 / NRRL Y-1140 / WM37) (Yeast).